Here is a 175-residue protein sequence, read N- to C-terminus: CDP-archaeol synthase (175 aa).

4 helical membrane-spanning segments follow: residues 41 to 61 (GLFSGIFCGFIAGCIEIWLSS), 82 to 102 (LIVVLALASGALFGDMFKSFF), 122 to 142 (FVVGAWVFTYLVAPEWFVSNF), and 150 to 170 (VIIITPLLHLTTNIIGYLIGV).

It belongs to the CDP-archaeol synthase family. The cofactor is Mg(2+).

Its subcellular location is the cell membrane. It catalyses the reaction 2,3-bis-O-(geranylgeranyl)-sn-glycerol 1-phosphate + CTP + H(+) = CDP-2,3-bis-O-(geranylgeranyl)-sn-glycerol + diphosphate. It functions in the pathway membrane lipid metabolism; glycerophospholipid metabolism. Its function is as follows. Catalyzes the formation of CDP-2,3-bis-(O-geranylgeranyl)-sn-glycerol (CDP-archaeol) from 2,3-bis-(O-geranylgeranyl)-sn-glycerol 1-phosphate (DGGGP) and CTP. This reaction is the third ether-bond-formation step in the biosynthesis of archaeal membrane lipids. In Methanosarcina barkeri (strain Fusaro / DSM 804), this protein is CDP-archaeol synthase.